The following is a 343-amino-acid chain: Endoglucanase C (343 aa).

The Proton donor role is filled by Glu140. Glu280 serves as the catalytic Nucleophile.

It belongs to the glycosyl hydrolase 5 (cellulase A) family.

The enzyme catalyses Endohydrolysis of (1-&gt;4)-beta-D-glucosidic linkages in cellulose, lichenin and cereal beta-D-glucans.. Its pathway is glycan metabolism; cellulose degradation. Its function is as follows. This enzyme catalyzes the endohydrolysis of 1,4-beta-glucosidic linkages in cellulose, lichenin and cereal beta-D-glucans. In Acetivibrio thermocellus (Hungateiclostridium thermocellum), this protein is Endoglucanase C (celC).